Here is a 272-residue protein sequence, read N- to C-terminus: Short-chain dehydrogenase reductase ATA1 (272 aa).

An NADP(+)-binding site is contributed by 14–38 (IITGGARGIGAATARLFTENGAYVI). Ser-143 serves as a coordination point for substrate. Catalysis depends on Tyr-156, which acts as the Proton acceptor. Residue Lys-160 coordinates NADP(+).

It belongs to the short-chain dehydrogenases/reductases (SDR) family. As to expression, expressed specifically in tapetal cells.

Its function is as follows. May play a role in tapetum development. The chain is Short-chain dehydrogenase reductase ATA1 from Arabidopsis thaliana (Mouse-ear cress).